The primary structure comprises 416 residues: RNA-editing ligase 2, mitochondrial (416 aa).

The transit peptide at 1 to 17 (MLRRLGVRHFRRTPLLF) directs the protein to the mitochondrion. Residues 29–31 (TEI), 56–62 (EKVHGAN), Arg-79, Glu-126, Phe-173, and 269–271 (KFK) contribute to the ATP site. Lys-57 functions as the N6-AMP-lysine intermediate in the catalytic mechanism.

This sequence belongs to the RNA ligase 2 family. As to quaternary structure, component of the RNA editing complex, a 1600 kDa complex composed of at least 20 proteins.

It is found in the mitochondrion. The enzyme catalyses ATP + (ribonucleotide)n-3'-hydroxyl + 5'-phospho-(ribonucleotide)m = (ribonucleotide)n+m + AMP + diphosphate.. RNA editing in kinetoplastid mitochondria inserts and deletes uridylates at multiple sites in pre-mRNAs as directed by guide RNAs. The protein is RNA-editing ligase 2, mitochondrial (REL2) of Trypanosoma brucei brucei (strain 927/4 GUTat10.1).